The following is a 352-amino-acid chain: N-acetyl-gamma-glutamyl-phosphate reductase (352 aa).

C155 is an active-site residue.

It belongs to the NAGSA dehydrogenase family. Type 1 subfamily.

The protein localises to the cytoplasm. It catalyses the reaction N-acetyl-L-glutamate 5-semialdehyde + phosphate + NADP(+) = N-acetyl-L-glutamyl 5-phosphate + NADPH + H(+). It participates in amino-acid biosynthesis; L-arginine biosynthesis; N(2)-acetyl-L-ornithine from L-glutamate: step 3/4. Its function is as follows. Catalyzes the NADPH-dependent reduction of N-acetyl-5-glutamyl phosphate to yield N-acetyl-L-glutamate 5-semialdehyde. The chain is N-acetyl-gamma-glutamyl-phosphate reductase from Synechococcus elongatus (strain ATCC 33912 / PCC 7942 / FACHB-805) (Anacystis nidulans R2).